A 216-amino-acid polypeptide reads, in one-letter code: MLYLFFALIFIISCSTKVESKKKYTYSFPKTYKEEKPTRGSLFKSPQSAYLYGSVRASEVGDVIYIRVIESINAIESVSTNVGRSTSFSNAISSFFGVHPATLKNLGAGGKSSFASKGGSKFQQSGVLTTTLAGRVVKVFPNGTMLVEAKKYIEVNGVKREFLLRGIVRPEDIDSNNTVTSDKIADMEIFFEGRGYIVRGGEPGWLAKIFAILFPF.

The signal sequence occupies residues 1–13; the sequence is MLYLFFALIFIIS. Residue Cys-14 is the site of N-palmitoyl cysteine attachment. Residue Cys-14 is the site of S-diacylglycerol cysteine attachment.

It belongs to the FlgH family. As to quaternary structure, the basal body constitutes a major portion of the flagellar organelle and consists of four rings (L,P,S, and M) mounted on a central rod.

The protein resides in the cell outer membrane. Its subcellular location is the bacterial flagellum basal body. Assembles around the rod to form the L-ring and probably protects the motor/basal body from shearing forces during rotation. The protein is Flagellar L-ring protein (flgH) of Aquifex aeolicus (strain VF5).